Reading from the N-terminus, the 189-residue chain is Small ribosomal subunit protein uS4 (189 aa).

The S4 RNA-binding domain occupies R107–G178. Residues H160–E189 form a disordered region.

It belongs to the universal ribosomal protein uS4 family. As to quaternary structure, component of the small ribosomal subunit. Mature ribosomes consist of a small (40S) and a large (60S) subunit. The 40S subunit contains about 32 different proteins and 1 molecule of RNA (18S). The 60S subunit contains 45 different proteins and 3 molecules of RNA (25S, 5.8S and 5S).

The protein resides in the cytoplasm. Component of the ribosome, a large ribonucleoprotein complex responsible for the synthesis of proteins in the cell. The small ribosomal subunit (SSU) binds messenger RNAs (mRNAs) and translates the encoded message by selecting cognate aminoacyl-transfer RNA (tRNA) molecules. The large subunit (LSU) contains the ribosomal catalytic site termed the peptidyl transferase center (PTC), which catalyzes the formation of peptide bonds, thereby polymerizing the amino acids delivered by tRNAs into a polypeptide chain. The nascent polypeptides leave the ribosome through a tunnel in the LSU and interact with protein factors that function in enzymatic processing, targeting, and the membrane insertion of nascent chains at the exit of the ribosomal tunnel. RPS9B is involved in nucleolar processing of pre-18S ribosomal RNA and ribosome assembly. This is Small ribosomal subunit protein uS4 (RPS9B) from Candida albicans (strain SC5314 / ATCC MYA-2876) (Yeast).